The primary structure comprises 340 residues: tRNA N6-adenosine threonylcarbamoyltransferase (340 aa).

Fe cation is bound by residues His-111 and His-115. Substrate is bound by residues 133 to 137 (VVSGG), Asp-166, Gly-179, Asp-183, and Asn-274. Asp-299 lines the Fe cation pocket.

The protein belongs to the KAE1 / TsaD family. It depends on Fe(2+) as a cofactor.

It is found in the cytoplasm. It carries out the reaction L-threonylcarbamoyladenylate + adenosine(37) in tRNA = N(6)-L-threonylcarbamoyladenosine(37) in tRNA + AMP + H(+). Functionally, required for the formation of a threonylcarbamoyl group on adenosine at position 37 (t(6)A37) in tRNAs that read codons beginning with adenine. Is involved in the transfer of the threonylcarbamoyl moiety of threonylcarbamoyl-AMP (TC-AMP) to the N6 group of A37, together with TsaE and TsaB. TsaD likely plays a direct catalytic role in this reaction. The protein is tRNA N6-adenosine threonylcarbamoyltransferase of Brachyspira hyodysenteriae (strain ATCC 49526 / WA1).